We begin with the raw amino-acid sequence, 239 residues long: Endolytic peptidoglycan transglycosylase RlpA (239 aa).

The N-terminal stretch at 1-25 (MTLTRKTLFLLTAAFGTHSLQTASA) is a signal peptide. In terms of domain architecture, SPOR spans 160 to 239 (VAENKDIFID…GMVRAVLTAG (80 aa)).

This sequence belongs to the RlpA family.

Functionally, lytic transglycosylase with a strong preference for naked glycan strands that lack stem peptides. The protein is Endolytic peptidoglycan transglycosylase RlpA of Neisseria meningitidis serogroup B (strain ATCC BAA-335 / MC58).